The following is a 182-amino-acid chain: Adenine phosphoribosyltransferase (182 aa).

This sequence belongs to the purine/pyrimidine phosphoribosyltransferase family. As to quaternary structure, homodimer.

It is found in the cytoplasm. The catalysed reaction is AMP + diphosphate = 5-phospho-alpha-D-ribose 1-diphosphate + adenine. The protein operates within purine metabolism; AMP biosynthesis via salvage pathway; AMP from adenine: step 1/1. In terms of biological role, catalyzes a salvage reaction resulting in the formation of AMP, that is energically less costly than de novo synthesis. The protein is Adenine phosphoribosyltransferase of Koribacter versatilis (strain Ellin345).